Here is a 93-residue protein sequence, read N- to C-terminus: Small ribosomal subunit protein uS19 (93 aa).

This sequence belongs to the universal ribosomal protein uS19 family.

Protein S19 forms a complex with S13 that binds strongly to the 16S ribosomal RNA. The chain is Small ribosomal subunit protein uS19 from Phytoplasma australiense.